A 369-amino-acid polypeptide reads, in one-letter code: Cyclic AMP receptor-like protein A (369 aa).

The Extracellular segment spans residues 1–4; the sequence is MIQI. A helical transmembrane segment spans residues 5–22; that stretch reads LLSTFISFIIIIVSSNDI. Over 23 to 72 the chain is Cytoplasmic; that stretch reads RSGENDNFNNNKMINNFLTTITTNDTIIIKETESPNDYDFSKEQIESLDK. The chain crosses the membrane as a helical span at residues 73–93; it reads IVYFSSTMGIVGALFIIVSFF. Residues 94–100 lie on the Extracellular side of the membrane; sequence LFKAART. Residues 101–121 traverse the membrane as a helical segment; sequence FATKMIFFLSLSDLFAAIFYL. Topologically, residues 122-146 are cytoplasmic; sequence PYYRDSDIMCNLQGMGLVFFLSSSY. The helical transmembrane segment at 147–167 threads the bilayer; the sequence is LWTMCISISLFMVFFTTIFEL. The Extracellular portion of the chain corresponds to 168–173; the sequence is NHWFKY. The chain crosses the membrane as a helical span at residues 174–194; that stretch reads FHFICWGIPLFTAIISLIFHA. The Cytoplasmic segment spans residues 195–212; the sequence is YGKTGSWCFISDPTSIFR. A helical membrane pass occupies residues 213–233; that stretch reads LLYYLPLIVVFFINLVVFIAI. The Extracellular segment spans residues 234–247; that stretch reads RWKISQHSNSLVSR. A helical membrane pass occupies residues 248–268; it reads VNIIVSFYLIAFSLSQLPTII. The Cytoplasmic segment spans residues 269–369; it reads NSIQNFSDPD…KLIIDDYNRV (101 aa).

This sequence belongs to the G-protein coupled receptor 5 family.

The protein resides in the membrane. Functionally, receptor for cAMP which may play a role in prestalk cell differentiation. May act as a negative regulator of cell growth. The polypeptide is Cyclic AMP receptor-like protein A (crlA) (Dictyostelium discoideum (Social amoeba)).